Here is a 341-residue protein sequence, read N- to C-terminus: L-threonine 3-dehydrogenase (341 aa).

C38 contributes to the Zn(2+) binding site. Residues T40 and H43 each act as charge relay system in the active site. Residues H63, E64, C93, C96, C99, and C107 each coordinate Zn(2+). NAD(+) contacts are provided by residues I175, D195, R200, 262–264 (LGI), and 286–287 (IY).

This sequence belongs to the zinc-containing alcohol dehydrogenase family. Homotetramer. The cofactor is Zn(2+).

The protein resides in the cytoplasm. The catalysed reaction is L-threonine + NAD(+) = (2S)-2-amino-3-oxobutanoate + NADH + H(+). Its pathway is amino-acid degradation; L-threonine degradation via oxydo-reductase pathway; glycine from L-threonine: step 1/2. Its function is as follows. Catalyzes the NAD(+)-dependent oxidation of L-threonine to 2-amino-3-ketobutyrate. The protein is L-threonine 3-dehydrogenase of Yersinia enterocolitica serotype O:8 / biotype 1B (strain NCTC 13174 / 8081).